The following is a 1564-amino-acid chain: Superkiller complex protein 3 (1564 aa).

Ser2 bears the N-acetylserine mark. 20 TPR repeats span residues 6–39 (VKTA…EKNN), 40–73 (YNAW…EPDQ), 272–305 (GPGL…SPVC), 307–339 (SGWY…VDNL), 386–419 (PGLL…YPDL), 420–453 (AEVH…DTEV), 455–492 (EYHY…DTYM), 493–527 (GKVF…DDTD), 564–597 (KWAW…DPKD), 598–631 (FNCW…NPES), 633–665 (YSVF…KEDY), 679–713 (MAKA…RADV), 790–824 (AQHL…DSNN), 826–860 (LYWN…EQIN), 861–894 (AVAW…DPSY), 980–1013 (APAF…LQTA), 1020–1054 (NVAI…LEDI), 1056–1084 (GFAL…VESE), 1326–1359 (KWSL…NPDQ), and 1400–1433 (VPAW…ASQR).

Belongs to the SKI3 family. In terms of assembly, component of the SKI complex which consists of SKIC2, SKIC3 and SKIC8. Interacts with PAF1. In terms of tissue distribution, widely expressed with the highest levels observed in vascular tissues, lymph node, pituitary, lung and intestine. Not expressed in the liver.

It is found in the cytoplasm. It localises to the nucleus. Its function is as follows. Component of the SKI complex, a multiprotein complex that assists the RNA-degrading exosome during the mRNA decay and quality-control pathways. The SKI complex catalyzes mRNA extraction from 80S ribosomal complexes in the 3'-5' direction and channels mRNA to the cytosolic exosome for degradation. SKI-mediated extraction of mRNA from stalled ribosomes allow binding of the Pelota-HBS1L complex and subsequent ribosome disassembly by ABCE1 for ribosome recycling. In the nucleus, the SKI complex associates with transcriptionally active genes in a manner dependent on PAF1 complex (PAF1C). This Homo sapiens (Human) protein is Superkiller complex protein 3.